A 125-amino-acid polypeptide reads, in one-letter code: Large ribosomal subunit protein bL12 (125 aa).

The protein belongs to the bacterial ribosomal protein bL12 family. In terms of assembly, homodimer. Part of the ribosomal stalk of the 50S ribosomal subunit. Forms a multimeric L10(L12)X complex, where L10 forms an elongated spine to which 2 to 4 L12 dimers bind in a sequential fashion. Binds GTP-bound translation factors.

In terms of biological role, forms part of the ribosomal stalk which helps the ribosome interact with GTP-bound translation factors. Is thus essential for accurate translation. The protein is Large ribosomal subunit protein bL12 of Ruegeria sp. (strain TM1040) (Silicibacter sp.).